Here is a 778-residue protein sequence, read N- to C-terminus: Hyaluronate lyase (778 aa).

The tat-type signal signal peptide spans 1 to 33 (MSWNRRSFLGALGVTCLAGAGMVPIVRPRTAAA). Active-site residues include Asn200, His250, and Tyr259.

This sequence belongs to the polysaccharide lyase 8 family. Predicted to be exported by the Tat system. The position of the signal peptide cleavage has not been experimentally proven.

It carries out the reaction [hyaluronan](n) = n 3-(4-deoxy-beta-D-gluc-4-enuronosyl)-N-acetyl-D-glucosamine + H2O. With respect to regulation, is salt-dependent and is active over a wide range of NaCl concentrations. Activity is slightly promoted by Ni(2+), and inhibited by most of the tested metal ions, including Li(+), K(+), Ba(2+), Mg(2+), Zn(2+), Ca(2+), Mn(2+) and Al(3+). Its function is as follows. Degrades hyaluronic acid into unsaturated disaccharides as the end products. Exhibits very low activity against various types of chondroitin sulfate variants. The polypeptide is Hyaluronate lyase (Thermasporomyces composti).